The primary structure comprises 179 residues: NADH:FAD oxidoreductase (179 aa).

Residue threonine 48–alanine 51 coordinates FAD. Serine 54 to aspartate 57 is a binding site for NAD(+). FAD is bound by residues cysteine 65 to tyrosine 71, alanine 99, valine 104 to arginine 109, and serine 144. Residues histidine 145 and tyrosine 166 to arginine 169 contribute to the NAD(+) site. FAD is bound at residue tyrosine 166.

It belongs to the non-flavoprotein flavin reductase family. As to quaternary structure, homodimer. The chlorophenol-4-monooxygenase is composed of an oxygenase component TftD and a reductase component TftC.

It catalyses the reaction FADH2 + NAD(+) = FAD + NADH + 2 H(+). Its pathway is xenobiotic degradation. Functionally, reductase component of a two-component system that degrades 2,4,5-trichlorophenol. TftC provides the FADH(2) required by TftD. TftD oxidizes 2,4,5-trichlorophenol (2,4,5-TCP) to 2,5-dichloro-p-benzoquinone, which is chemically reduced to 2,5-dichloro-p-hydroquinone (2,5-DiCHQ). Then, TftD oxidizes the latter to 5-chloro-2-hydroxy-p-benzoquinone. The polypeptide is NADH:FAD oxidoreductase (tftC) (Burkholderia cepacia (Pseudomonas cepacia)).